The following is a 363-amino-acid chain: DNA replication and repair protein RecF (363 aa).

Gly33–Thr40 contacts ATP.

This sequence belongs to the RecF family.

The protein resides in the cytoplasm. Functionally, the RecF protein is involved in DNA metabolism; it is required for DNA replication and normal SOS inducibility. RecF binds preferentially to single-stranded, linear DNA. It also seems to bind ATP. The chain is DNA replication and repair protein RecF from Tropheryma whipplei (strain TW08/27) (Whipple's bacillus).